The chain runs to 526 residues: Peptide chain release factor 3 (526 aa).

The region spanning 9–277 (ERRRTFAIIS…AFAEYAPPPQ (269 aa)) is the tr-type G domain. GTP contacts are provided by residues 18-25 (SHPDAGKT), 86-90 (DTPGH), and 140-143 (NKLD).

It belongs to the TRAFAC class translation factor GTPase superfamily. Classic translation factor GTPase family. PrfC subfamily.

It localises to the cytoplasm. Increases the formation of ribosomal termination complexes and stimulates activities of RF-1 and RF-2. It binds guanine nucleotides and has strong preference for UGA stop codons. It may interact directly with the ribosome. The stimulation of RF-1 and RF-2 is significantly reduced by GTP and GDP, but not by GMP. The chain is Peptide chain release factor 3 from Methylococcus capsulatus (strain ATCC 33009 / NCIMB 11132 / Bath).